We begin with the raw amino-acid sequence, 260 residues long: Phosphatidate cytidylyltransferase (260 aa).

7 helical membrane-spanning segments follow: residues 9 to 29 (IIALIVFLPVLLKGGLILMLF), 46 to 66 (MIKFLSIPGIISALGILIIML), 70 to 90 (AGSWVNDLQLKSLIAMSFILL), 102 to 122 (FMDAAFCLMSIAYVGIGFMYL), 130 to 150 (LHYILFAFLVVWLTDTGAYIF), 172 to 192 (FVGGLICSLIVPLVMMIFVDF), and 196 to 216 (LWLLLIITIILSMFGQLGDLV).

This sequence belongs to the CDS family.

The protein resides in the cell membrane. It carries out the reaction a 1,2-diacyl-sn-glycero-3-phosphate + CTP + H(+) = a CDP-1,2-diacyl-sn-glycerol + diphosphate. It participates in phospholipid metabolism; CDP-diacylglycerol biosynthesis; CDP-diacylglycerol from sn-glycerol 3-phosphate: step 3/3. This chain is Phosphatidate cytidylyltransferase (cdsA), found in Staphylococcus saprophyticus subsp. saprophyticus (strain ATCC 15305 / DSM 20229 / NCIMB 8711 / NCTC 7292 / S-41).